Here is a 216-residue protein sequence, read N- to C-terminus: Sperm microtubule inner protein 8 (216 aa).

As to quaternary structure, microtubule inner protein component of sperm flagellar doublet microtubules.

Its subcellular location is the cytoplasm. The protein localises to the cytoskeleton. It localises to the flagellum axoneme. In terms of biological role, microtubule inner protein (MIP) part of the dynein-decorated doublet microtubules (DMTs) in flagellum axoneme. May serve to reinforce and thus stabilize the microtubule structure in the sperm flagella. In Rattus norvegicus (Rat), this protein is Sperm microtubule inner protein 8 (Spmip8).